Consider the following 757-residue polypeptide: LPS-assembly protein LptD (757 aa).

Residues 1–21 (MRRLIPIAITGSLLWGAAVQA) form the signal peptide.

Belongs to the LptD family. In terms of assembly, component of the lipopolysaccharide transport and assembly complex. Interacts with LptE and LptA.

It localises to the cell outer membrane. Functionally, together with LptE, is involved in the assembly of lipopolysaccharide (LPS) at the surface of the outer membrane. In Alkalilimnicola ehrlichii (strain ATCC BAA-1101 / DSM 17681 / MLHE-1), this protein is LPS-assembly protein LptD.